The primary structure comprises 214 residues: Large ribosomal subunit protein uL3 (214 aa).

The tract at residues 129–157 (FGRGPMSHGSKNHRRPGSIGAGTTPGRVF) is disordered.

Belongs to the universal ribosomal protein uL3 family. As to quaternary structure, part of the 50S ribosomal subunit. Forms a cluster with proteins L14 and L19.

Functionally, one of the primary rRNA binding proteins, it binds directly near the 3'-end of the 23S rRNA, where it nucleates assembly of the 50S subunit. In Synechococcus sp. (strain JA-2-3B'a(2-13)) (Cyanobacteria bacterium Yellowstone B-Prime), this protein is Large ribosomal subunit protein uL3.